The primary structure comprises 276 residues: Formamidopyrimidine-DNA glycosylase (276 aa).

The active-site Schiff-base intermediate with DNA is proline 2. Glutamate 3 serves as the catalytic Proton donor. Lysine 60 (proton donor; for beta-elimination activity) is an active-site residue. Positions 93 and 112 each coordinate DNA. Residues asparagine 240–proline 274 form an FPG-type zinc finger. Arginine 264 acts as the Proton donor; for delta-elimination activity in catalysis.

The protein belongs to the FPG family. In terms of assembly, monomer. Zn(2+) serves as cofactor.

It catalyses the reaction Hydrolysis of DNA containing ring-opened 7-methylguanine residues, releasing 2,6-diamino-4-hydroxy-5-(N-methyl)formamidopyrimidine.. The enzyme catalyses 2'-deoxyribonucleotide-(2'-deoxyribose 5'-phosphate)-2'-deoxyribonucleotide-DNA = a 3'-end 2'-deoxyribonucleotide-(2,3-dehydro-2,3-deoxyribose 5'-phosphate)-DNA + a 5'-end 5'-phospho-2'-deoxyribonucleoside-DNA + H(+). Functionally, involved in base excision repair of DNA damaged by oxidation or by mutagenic agents. Acts as a DNA glycosylase that recognizes and removes damaged bases. Has a preference for oxidized purines, such as 7,8-dihydro-8-oxoguanine (8-oxoG). Has AP (apurinic/apyrimidinic) lyase activity and introduces nicks in the DNA strand. Cleaves the DNA backbone by beta-delta elimination to generate a single-strand break at the site of the removed base with both 3'- and 5'-phosphates. This is Formamidopyrimidine-DNA glycosylase from Bacillus cereus (strain ATCC 14579 / DSM 31 / CCUG 7414 / JCM 2152 / NBRC 15305 / NCIMB 9373 / NCTC 2599 / NRRL B-3711).